Consider the following 468-residue polypeptide: Glutathione reductase (468 aa).

The FAD site is built by Ser-17 and Gly-18. Ser-17 is a binding site for glutathione. Arg-24 contacts glutathione. FAD is bound by residues Glu-38, Thr-45, Cys-46, and Lys-54. A disulfide bridge connects residues Cys-46 and Cys-51. Residue Tyr-103 coordinates glutathione. FAD is bound at residue Ala-119. Residues Ala-185, Ile-188, Glu-191, Arg-208, Arg-214, and Gly-276 each contribute to the NADP(+) site. Asp-317 is a binding site for FAD. An NADP(+)-binding site is contributed by Glu-323. Thr-325 lines the FAD pocket. Arg-333 lines the glutathione pocket. An NADP(+)-binding site is contributed by Val-358. A glutathione-binding site is contributed by Lys-410. Residue His-457 participates in FAD binding. The active-site Proton acceptor is the His-457.

This sequence belongs to the class-I pyridine nucleotide-disulfide oxidoreductase family. In terms of assembly, homodimer. Requires FAD as cofactor.

The protein resides in the cytoplasm. It is found in the mitochondrion. The enzyme catalyses 2 glutathione + NADP(+) = glutathione disulfide + NADPH + H(+). Its function is as follows. Catalyzes the reduction of glutathione disulfide (GSSG) to reduced glutathione (GSH). Constitutes the major mechanism to maintain a high GSH:GSSG ratio in the cytosol. The protein is Glutathione reductase (gtr-1) of Neurospora crassa (strain ATCC 24698 / 74-OR23-1A / CBS 708.71 / DSM 1257 / FGSC 987).